Consider the following 329-residue polypeptide: Segregation and condensation protein B (329 aa).

Disordered stretches follow at residues methionine 1–aspartate 39, isoleucine 252–alanine 274, and serine 286–glutamate 329.

It belongs to the ScpB family. Homodimer. Homodimerization may be required to stabilize the binding of ScpA to the Smc head domains. Component of the Structural Maintenance of Chromosome (SMC) condensin-like complex composed of ScpA, ScpB and the Smc homodimer. ScpA and ScpB bind to the head domain of Smc, the presence of the three proteins is required for the association of the complex with DNA.

The protein localises to the cytoplasm. Functionally, a conditionally essential component of the chromosome segregation machinery. Required for chromosome condensation and partitioning. Important for positioning and anchoring of ParB-parS complexes (ori of replication) in the subpolar region, and of the ter replication site, as well as for segration of the ParB-parS complex and thus chromosome segregation. Probably acts via the formation of a condensin-like complex containing Smc, ScpA and ScpB that pulls DNA away from mid-cell into both cell halves. The polypeptide is Segregation and condensation protein B (Myxococcus xanthus (strain DK1622)).